The sequence spans 549 residues: Myotubularin-related protein 9 (549 aa).

N-acetylmethionine is present on Met1. One can recognise a GRAM domain in the interval 4–99; sequence AELIKTPRVD…LNIASSIEAL (96 aa). The Myotubularin phosphatase domain occupies 123-498; that stretch reads GWHSFLPEQE…QSLPLWEGIF (376 aa). The stretch at 508 to 542 forms a coiled coil; the sequence is LDEAYEEMVNIIEYNKELQAKVNILRRQLAELETE. Residue Ser548 is modified to Phosphoserine.

It belongs to the protein-tyrosine phosphatase family. Non-receptor class myotubularin subfamily. In terms of assembly, homodimer. Heterodimer (via C-terminus) with lipid phosphatase MTMR6 (via C-terminus). Heterodimer (via coiled coil domain) with lipid phosphatase MTMR7 (via C-terminus). Heterodimer with lipid phosphatase MTMR8. In terms of tissue distribution, expressed in many tissues.

It is found in the cytoplasm. It localises to the cell projection. The protein resides in the ruffle membrane. Its subcellular location is the perinuclear region. The protein localises to the endoplasmic reticulum. Functionally, acts as an adapter for myotubularin-related phosphatases. Increases lipid phosphatase MTMR6 catalytic activity, specifically towards phosphatidylinositol 3,5-bisphosphate and MTMR6 binding affinity for phosphorylated phosphatidylinositols. Positively regulates lipid phosphatase MTMR7 catalytic activity. Increases MTMR8 catalytic activity towards phosphatidylinositol 3-phosphate. The formation of the MTMR6-MTMR9 complex, stabilizes both MTMR6 and MTMR9 protein levels. Stabilizes MTMR8 protein levels. Plays a role in the late stages of macropinocytosis possibly by regulating MTMR6-mediated dephosphorylation of phosphatidylinositol 3-phosphate in membrane ruffles. Negatively regulates autophagy, in part via its association with MTMR8. Negatively regulates DNA damage-induced apoptosis, in part via its association with MTMR6. Does not bind mono-, di- and tri-phosphorylated phosphatidylinositols, phosphatidic acid and phosphatidylserine. The polypeptide is Myotubularin-related protein 9 (MTMR9) (Homo sapiens (Human)).